An 878-amino-acid polypeptide reads, in one-letter code: DNA gyrase subunit A (878 aa).

Residues 34–533 (LPDVRDGLKP…NSADINIEDL (500 aa)) enclose the Topo IIA-type catalytic domain. Residue Tyr122 is the O-(5'-phospho-DNA)-tyrosine intermediate of the active site. Residues 560–566 (QRRGGKG) carry the GyrA-box motif. Positions 844–878 (DDEELDAIDGSVAEGDEDIAPEAESDDDVADDADE) are disordered. Acidic residues predominate over residues 857-878 (EGDEDIAPEAESDDDVADDADE).

This sequence belongs to the type II topoisomerase GyrA/ParC subunit family. In terms of assembly, heterotetramer, composed of two GyrA and two GyrB chains. In the heterotetramer, GyrA contains the active site tyrosine that forms a transient covalent intermediate with DNA, while GyrB binds cofactors and catalyzes ATP hydrolysis.

Its subcellular location is the cytoplasm. It catalyses the reaction ATP-dependent breakage, passage and rejoining of double-stranded DNA.. Its function is as follows. A type II topoisomerase that negatively supercoils closed circular double-stranded (ds) DNA in an ATP-dependent manner to modulate DNA topology and maintain chromosomes in an underwound state, and also catalyzes the interconversion of other topological isomers of double-stranded DNA rings, including catenanes and knotted rings. Replenishes negative supercoiling downstream of highly transcribed genes to help control overall chromosomal supercoiling density. E.coli makes 15% more negative supercoils in pBR322 plasmid DNA than S.typhimurium; the S.typhimurium GyrB subunit is toxic in E.coli, while the E.coli copy can be expressed in S.typhimurium even though the 2 subunits have 777/804 residues identical. In terms of biological role, negative supercoiling favors strand separation, and DNA replication, transcription, recombination and repair, all of which involve strand separation. Type II topoisomerases break and join 2 DNA strands simultaneously in an ATP-dependent manner. In Salmonella typhimurium (strain LT2 / SGSC1412 / ATCC 700720), this protein is DNA gyrase subunit A.